Here is a 333-residue protein sequence, read N- to C-terminus: MKHLNETTNVRILSQFDMDTGYQAVVQKGNVGSKYVYGLQLRKGATTILRGYRGSKINNPILELSGQAGGHTQTWEFAGDRKDINGEERAGQWFIGVKPSKIEGSKIIWAKQIARVDLRNQMGPHYSNTDFPRLSYLNRAGSNPFAGNKMTHAEAAVSPDYTKFLIATVENNCIGHFTIYNLDTINEKLDEKGNSEDVNLETVKYEDSFIIDNLYGDDNNSIVNSIQGYDLDNDGNIYISSQKAPDFDGSYYAHHKQIVKIPYYARSKESEDQWRAVNLSEFGGLDIPGKHSEVESIQIIGENHCYLTVAYHSKNKAGENKTTLNEIYELSWN.

Functionally, this heat-sensitive bacteriocin inhibits the growth of closely related Lactobacillus species. This chain is Bacteriocin helveticin-J (hlv), found in Lactobacillus helveticus (Lactobacillus suntoryeus).